Consider the following 108-residue polypeptide: Competence protein ComGC (108 aa).

The first 13 residues, 1-13 (MKKMMTFLKKAKV), serve as a signal peptide directing secretion. Positions 14 to 39 (KAFTLVEMLVVLLIISVLFLLFVPNL) are may be involved in polymerization of ComGC. Phe16 bears the N-methylphenylalanine mark. The chain crosses the membrane as a helical span at residues 16-36 (FTLVEMLVVLLIISVLFLLFV).

This sequence belongs to the ComGC family. As to quaternary structure, the transformation pili are flexible filaments, consisting mainly of the major pilin ComGC and smaller amounts of the minor pilins, including at least ComGD, ComGF and ComGG, and perhaps ComGE. Homodimer. Forms higher-order multimers. Interacts with ComGG; the interaction is probably direct. In terms of processing, undergoes proteolytic cleavage.

Its subcellular location is the cell membrane. The protein localises to the cell surface. It localises to the fimbrium. The protein resides in the secreted. Functionally, major component of the type IV-like pilus (T4P) that plays a role in transformation. Transformation pili are dynamically extended and retracted, perhaps thereby promoting DNA uptake and transformation. Required for transformation. Required for DNA binding. This Streptococcus pneumoniae (strain ATCC BAA-255 / R6) protein is Competence protein ComGC.